Reading from the N-terminus, the 526-residue chain is Probable polyol transporter 4 (526 aa).

Disordered regions lie at residues 1 to 21 (MMKN…AVSV) and 28 to 47 (YQRM…AEAR). Basic and acidic residues predominate over residues 29–47 (QRMDSDAEESQNHREAEAR). The next 12 helical transmembrane spans lie at 63-83 (SLNN…VLFI), 92-112 (VQTE…SLAG), 125-145 (MALA…APSF), 153-173 (TLAG…IAEI), 180-200 (GFFT…GYVS), 215-235 (IMLA…CVIP), 300-320 (MLIV…DATV), 340-360 (AATV…TFLI), 371-391 (VSTI…TFLG), 395-415 (LGIT…SIGM), 437-457 (ALGA…FLSV), and 465-485 (GTFF…YVLV).

It belongs to the major facilitator superfamily. Sugar transporter (TC 2.A.1.1) family.

It localises to the membrane. In terms of biological role, plasma membrane sugar-proton symporter. The sequence is that of Probable polyol transporter 4 (PLT4) from Arabidopsis thaliana (Mouse-ear cress).